The primary structure comprises 483 residues: Protein disulfide-isomerase 5-3 (483 aa).

Residues N53, N74, and N99 are each glycosylated (N-linked (GlcNAc...) asparagine). The Thioredoxin domain occupies 133–263 (EETKEEFPDG…IVKMVEGLVA (131 aa)). C170 functions as the Nucleophile in the catalytic mechanism. N-linked (GlcNAc...) asparagine glycans are attached at residues N279, N326, and N376. Residues 442–462 (FSHFITNLCAIIGGVFTVAGI) traverse the membrane as a helical segment.

The protein belongs to the protein disulfide isomerase family. As to expression, widely expressed.

The protein resides in the membrane. Its function is as follows. Acts as a protein-folding catalyst that interacts with nascent polypeptides to catalyze the formation, isomerization, and reduction or oxidation of disulfide bonds. In Arabidopsis thaliana (Mouse-ear cress), this protein is Protein disulfide-isomerase 5-3 (PDIL5-3).